Consider the following 355-residue polypeptide: Probable butyrate kinase (355 aa).

It belongs to the acetokinase family.

The protein resides in the cytoplasm. The enzyme catalyses butanoate + ATP = butanoyl phosphate + ADP. In Listeria monocytogenes serotype 4b (strain CLIP80459), this protein is Probable butyrate kinase.